Here is a 436-residue protein sequence, read N- to C-terminus: Voltage-gated purine nucleotide uniporter SLC17A9 (436 aa).

Transmembrane regions (helical) follow at residues 64–84 (IVLS…GHLG), 92–112 (VILL…LLAH), 118–138 (LAFM…YFPA), 158–178 (IVGA…SLLL), 181–201 (YGWQ…VWYV), 239–259 (PAVW…FILL), 276–296 (WIFN…SGFL), 316–336 (GMGL…SSFC), 369–389 (GFLF…GVCL), and 402–422 (CLFN…LVFG).

This sequence belongs to the major facilitator superfamily. Sodium/anion cotransporter family. Widely expressed, but more predominantly in adrenal gland, brain and thyroid.

It is found in the cytoplasmic vesicle. The protein localises to the secretory vesicle. The protein resides in the chromaffin granule membrane. Its subcellular location is the secretory vesicle membrane. It localises to the lysosome membrane. It catalyses the reaction ATP(in) = ATP(out). The enzyme catalyses ADP(in) = ADP(out). The catalysed reaction is GTP(in) = GTP(out). Its activity is regulated as follows. Activity is chloride-dependent. Inhibited by AMP-PNP, gammaS-ATP, diadenosine triphosphate, 4,4'- diisothiocyanatostilbene-2,2'-disulfonate (DIDS) and Evans blue. In terms of biological role, voltage-gated ATP nucleotide uniporter that can also transport the purine nucleotides ADP and GTP. Uses the membrane potential as the driving force to control ATP accumulation in lysosomes and secretory vesicles. By controlling ATP storage in lysosomes, regulates ATP-dependent proteins of these organelles. Also indirectly regulates the exocytosis of ATP through its import into lysosomes in astrocytes and secretory vesicles such as adrenal chromaffin granules, mucin granules and synaptic vesicles. This chain is Voltage-gated purine nucleotide uniporter SLC17A9, found in Homo sapiens (Human).